A 62-amino-acid chain; its full sequence is Sauvatide (62 aa).

Positions 1–24 (MDILKKSLFLILFLGLVSISFCDG) are cleaved as a signal peptide. A propeptide spanning residues 25–46 (EKRQDDDEANESEEKKEIHEVE) is cleaved from the precursor. The residue at position 58 (Lys58) is a Lysine amide.

Expressed by the skin glands.

Its subcellular location is the secreted. Induces contraction of smooth muscle in isolated rat urinary bladder with an EC(50) value of 2.2nM. The polypeptide is Sauvatide (Phyllomedusa sauvagei (Sauvage's leaf frog)).